The primary structure comprises 103 residues: Large ribosomal subunit protein bL21 (103 aa).

Belongs to the bacterial ribosomal protein bL21 family. In terms of assembly, part of the 50S ribosomal subunit. Contacts protein L20.

Functionally, this protein binds to 23S rRNA in the presence of protein L20. The sequence is that of Large ribosomal subunit protein bL21 from Psychrobacter arcticus (strain DSM 17307 / VKM B-2377 / 273-4).